Consider the following 257-residue polypeptide: Homeobox protein goosecoid (257 aa).

Residues 160–219 constitute a DNA-binding region (homeobox); the sequence is KRRHRTIFTDEQLEALENLFQETKYPDVGTREQLARKVHLREEKVEVWFKNRRAKWRRQK. Residues 213–257 form a disordered region; sequence AKWRRQKRSSSEESENAEKWNKTSSSKASPEKREEEGKSDLDSDS. A compositionally biased stretch (basic and acidic residues) spans 241–257; sequence SPEKREEEGKSDLDSDS.

Belongs to the paired homeobox family. Bicoid subfamily.

It localises to the nucleus. Regulates chordin (CHRD). May play a role in spatial programing within discrete embryonic fields or lineage compartments during organogenesis. In concert with NKX3-2, plays a role in defining the structural components of the middle ear; required for the development of the entire tympanic ring. Probably involved in the regulatory networks that define neural crest cell fate specification and determine mesoderm cell lineages in mammals. The polypeptide is Homeobox protein goosecoid (GSC) (Saguinus labiatus (Red-chested mustached tamarin)).